The following is a 209-amino-acid chain: RFTSAFSPVAFSLGLLLVMATAFPTPGPVGGESQADATSNRPPLTSPDKMEEFIKYILGKISALRKEMCDKYNKCEDSKEALAENNLRLPKLAEKDGCFQSGFNQETCLTRITTGLLEFQIHLKYIQANYEGNKEDANSVYISTKLLVQMLMKKVKSQDEVTTPDPTTDTSLQAILKAQDKWLKHTTIHLILRSLEDFLQFSLRAVRIM.

The signal sequence occupies residues 1 to 26; that stretch reads RFTSAFSPVAFSLGLLLVMATAFPTP. Positions 28–47 are disordered; sequence PVGGESQADATSNRPPLTSP. Cys-69 and Cys-75 are oxidised to a cystine. Ser-78 carries the phosphoserine modification. Cys-98 and Cys-108 are disulfide-bonded.

This sequence belongs to the IL-6 superfamily. In terms of assembly, component of a hexamer of two molecules each of IL6, IL6R and IL6ST; first binds to IL6R to associate with the signaling subunit IL6ST. Interacts with IL6R (via the N-terminal ectodomain); this interaction may be affected by IL6R-binding with SORL1, hence decreasing IL6 cis signaling. Interacts with SORL1 (via the N-terminal ectodomain); this interaction leads to IL6 internalization and lysosomal degradation. May form a trimeric complex with the soluble SORL1 ectodomain and soluble IL6R receptor; this interaction might stabilize circulating IL6, hence promoting IL6 trans signaling.

The protein resides in the secreted. Cytokine with a wide variety of biological functions in immunity, tissue regeneration, and metabolism. Binds to IL6R, then the complex associates to the signaling subunit IL6ST/gp130 to trigger the intracellular IL6-signaling pathway. The interaction with the membrane-bound IL6R and IL6ST stimulates 'classic signaling', whereas the binding of IL6 and soluble IL6R to IL6ST stimulates 'trans-signaling'. Alternatively, 'cluster signaling' occurs when membrane-bound IL6:IL6R complexes on transmitter cells activate IL6ST receptors on neighboring receiver cells. Its function is as follows. IL6 is a potent inducer of the acute phase response. Rapid production of IL6 contributes to host defense during infection and tissue injury, but excessive IL6 synthesis is involved in disease pathology. In the innate immune response, is synthesized by myeloid cells, such as macrophages and dendritic cells, upon recognition of pathogens through toll-like receptors (TLRs) at the site of infection or tissue injury. In the adaptive immune response, is required for the differentiation of B cells into immunoglobulin-secreting cells. Plays a major role in the differentiation of CD4(+) T cell subsets. Essential factor for the development of T follicular helper (Tfh) cells that are required for the induction of germinal-center formation. Required to drive naive CD4(+) T cells to the Th17 lineage. Also required for proliferation of myeloma cells and the survival of plasmablast cells. Functionally, acts as an essential factor in bone homeostasis and on vessels directly or indirectly by induction of VEGF, resulting in increased angiogenesis activity and vascular permeability. Induces, through 'trans-signaling' and synergistically with IL1B and TNF, the production of VEGF. Involved in metabolic controls, is discharged into the bloodstream after muscle contraction increasing lipolysis and improving insulin resistance. 'Trans-signaling' in central nervous system also regulates energy and glucose homeostasis. Mediates, through GLP-1, crosstalk between insulin-sensitive tissues, intestinal L cells and pancreatic islets to adapt to changes in insulin demand. Also acts as a myokine. Plays a protective role during liver injury, being required for maintenance of tissue regeneration. Also has a pivotal role in iron metabolism by regulating HAMP/hepcidin expression upon inflammation or bacterial infection. Through activation of IL6ST-YAP-NOTCH pathway, induces inflammation-induced epithelial regeneration. The sequence is that of Interleukin-6 (IL6) from Phoca vitulina (Harbor seal).